The chain runs to 221 residues: Large ribosomal subunit protein uL4 (221 aa).

A disordered region spans residues 48–77 (TASTKTRGEVSGGGRKPWIQKHTGRARQGS).

The protein belongs to the universal ribosomal protein uL4 family. As to quaternary structure, part of the 50S ribosomal subunit.

In terms of biological role, one of the primary rRNA binding proteins, this protein initially binds near the 5'-end of the 23S rRNA. It is important during the early stages of 50S assembly. It makes multiple contacts with different domains of the 23S rRNA in the assembled 50S subunit and ribosome. Forms part of the polypeptide exit tunnel. The protein is Large ribosomal subunit protein uL4 of Thermosipho africanus (strain TCF52B).